A 261-amino-acid polypeptide reads, in one-letter code: Small ribosomal subunit protein eS1 (261 aa).

The segment covering 1 to 18 (MAVGKNKRISKGKKGGKK) has biased composition (basic residues). The tract at residues 1–20 (MAVGKNKRISKGKKGGKKKA) is disordered.

The protein belongs to the eukaryotic ribosomal protein eS1 family. In terms of assembly, component of the small ribosomal subunit. Mature ribosomes consist of a small (40S) and a large (60S) subunit. The 40S subunit contains about 33 different proteins and 1 molecule of RNA (18S). The 60S subunit contains about 49 different proteins and 3 molecules of RNA (25S, 5.8S and 5S).

It is found in the cytoplasm. The polypeptide is Small ribosomal subunit protein eS1 (Catharanthus roseus (Madagascar periwinkle)).